We begin with the raw amino-acid sequence, 883 residues long: MIPLLLSLLAALVLTQAPAALADDLKEDSSEDRAFRVRIGAAQLRGVLGGALAIPCHVHHLRPPPSRRAAPGFPRVKWTFLSGDREVEVLVARGLRVKVNEAYRFRVALPAYPASLTDVSLVLSELRPNDSGVYRCEVQHGIDDSSDAVEVKVKGVVFLYREGSARYAFSFAGAQEACARIGARIATPEQLYAAYLGGYEQCDAGWLSDQTVRYPIQNPREACYGDMDGYPGVRNYGVVGPDDLYDVYCYAEDLNGELFLGAPPGKLTWEEARDYCLERGAQIASTGQLYAAWNGGLDRCSPGWLADGSVRYPIITPSQRCGGGLPGVKTLFLFPNQTGFPSKQNRFNVYCFRDSAHPSAFSEASSPASDGLEAIVTVTEKLEELQLPQEAVESESRGAIYSIPITEDGGGGSSTPEDPAEAPRTPLESETQSVAPPTGSSEEEGEALEEEERFKDTETPKEEKEQENLWVWPTELSSPLPTGLETEHSLSQVSPPAQAVLQVGASPSPRPPRVHGPTVETLQPPGEGSLTSTPDGAREVGGETGSPELSGVPREREEAGSSSLEDGPSLLPETWAPVGTREVETPSEEKSGRTVLTGTSVQAQPVLPTDSASRGGVAVAPSSGDCIPSPCHNGGTCLEEKEGFRCLCVPGYGGDLCDVGLHFCSPGWEPFQGACYKHFSTRRSWEEAESQCRALGAHLTSICTPEEQDFVNDRYREYQWIGLNDRTIEGDFLWSDGPPLLYENWNPGQPDSYFLSGENCVVMVWHDQGQWSDVPCNYHLSYTCKMGLVSCGPPPQLPLAQIFGRPRLRYAVDTVLRYRCRDGLAQRNLPLIRCQENGLWEAPQISCVPRRPARALRSMTAPEGPRGQLPRQRKALLTPPSSL.

The first 22 residues, 1–22, serve as a signal peptide directing secretion; it reads MIPLLLSLLAALVLTQAPAALA. The 120-residue stretch at 35 to 154 folds into the Ig-like V-type domain; sequence FRVRIGAAQL…SSDAVEVKVK (120 aa). Cystine bridges form between Cys56-Cys136, Cys178-Cys249, Cys202-Cys223, Cys276-Cys351, and Cys300-Cys321. Asn129 is a glycosylation site (N-linked (GlcNAc...) asparagine). 2 consecutive Link domains span residues 156–251 and 256–353; these read VVFL…YCYA and GELF…YCFR. The N-linked (GlcNAc...) asparagine glycan is linked to Asn336. Residues 389-574 form a disordered region; that stretch reads QEAVESESRG…EDGPSLLPET (186 aa). Position 413 is a phosphoserine (Ser413). The O-linked (Xyl...) (chondroitin sulfate) serine glycan is linked to Ser413. Residues 428–440 show a composition bias toward polar residues; it reads ESETQSVAPPTGS. A compositionally biased stretch (acidic residues) spans 441–451; that stretch reads SEEEGEALEEE. Residues 452 to 467 show a composition bias toward basic and acidic residues; that stretch reads ERFKDTETPKEEKEQE. The GPI-anchor amidated serine moiety is linked to residue Ser622. Residues 622 to 658 form the EGF-like domain; sequence SSGDCIPSPCHNGGTCLEEKEGFRCLCVPGYGGDLCD. Intrachain disulfides connect Cys626–Cys637, Cys631–Cys646, Cys648–Cys657, Cys692–Cys784, Cys760–Cys776, Cys791–Cys834, and Cys820–Cys847. The C-type lectin domain occupies 658-786; the sequence is DVGLHFCSPG…NYHLSYTCKM (129 aa). The Sushi domain occupies 789-849; sequence VSCGPPPQLP…WEAPQISCVP (61 aa). Residues 859 to 883 are disordered; sequence MTAPEGPRGQLPRQRKALLTPPSSL.

The protein belongs to the aggrecan/versican proteoglycan family. Interacts with TNR. In terms of processing, O-glycosylated; contains chondroitin sulfate. Brain.

The protein localises to the secreted. It is found in the extracellular space. Its subcellular location is the extracellular matrix. The protein resides in the membrane. May play a role in the terminally differentiating and the adult nervous system during postnatal development. Could stabilize interactions between hyaluronan (HA) and brain proteoglycans. Isoform 2 may function as a chondroitin sulfate-bearing cell surface receptor. This chain is Brevican core protein (Bcan), found in Rattus norvegicus (Rat).